The chain runs to 651 residues: Probable endo-1,3(4)-beta-glucanase NFIA_089530 (651 aa).

An N-terminal signal peptide occupies residues 1–21 (MAPSSLFLSVGSLIASSLVSA). The GH16 domain occupies 36–289 (ESWQGESFIN…WAGNVFAEST (254 aa)). A glycan (N-linked (GlcNAc...) asparagine) is linked at N64. Residue E145 is the Nucleophile of the active site. The active-site Proton donor is the E150. A glycan (N-linked (GlcNAc...) asparagine) is linked at N200. A compositionally biased stretch (low complexity) spans 364 to 378 (PVPAETTAVPQPAQT). Disordered regions lie at residues 364 to 422 (PVPA…ESTS) and 508 to 557 (SEIP…PVPA). 2 stretches are compositionally biased toward polar residues: residues 379-400 (NTVA…TTVP) and 520-535 (QAVS…TAQG). Low complexity predominate over residues 542-557 (SIASASAAPSTIPVPA). The GPI-anchor amidated asparagine moiety is linked to residue N629. A propeptide spans 630–651 (GANRMSVGLSGLIGVMFIAALA) (removed in mature form).

The protein belongs to the glycosyl hydrolase 16 family.

The protein localises to the cell membrane. The enzyme catalyses Endohydrolysis of (1-&gt;3)- or (1-&gt;4)-linkages in beta-D-glucans when the glucose residue whose reducing group is involved in the linkage to be hydrolyzed is itself substituted at C-3.. Its function is as follows. Mixed-linked glucanase involved in the degradation of complex natural cellulosic substrates. This Neosartorya fischeri (strain ATCC 1020 / DSM 3700 / CBS 544.65 / FGSC A1164 / JCM 1740 / NRRL 181 / WB 181) (Aspergillus fischerianus) protein is Probable endo-1,3(4)-beta-glucanase NFIA_089530.